Consider the following 339-residue polypeptide: Neutrophil cytosol factor 4 (339 aa).

The region spanning 19-140 is the PX domain; sequence DVAVSANIAD…IFFYQSAYDA (122 aa). A 1,2-diacyl-sn-glycero-3-phospho-(1D-myo-inositol-3-phosphate)-binding positions include 58–60 and 92–94; these read RYR and KVY. At T154 the chain carries Phosphothreonine. The SH3 domain occupies 170–229; sequence MEAPRAEALFDFTGNSKLELSFKAGDVIFLLSKINKDWLEGTSQGATGIFPGSFVKILKD. One can recognise a PB1 domain in the interval 237-329; the sequence is TNWLRCYFYE…FPWKLHVTQK (93 aa). Residue S315 is modified to Phosphoserine.

In terms of assembly, component of the phagocyte NADPH oxidase complex composed of an obligatory core heterodimer formed by the membrane proteins CYBA and CYBB and the cytosolic regulatory subunits NCF1/p47-phox, NCF2/p67-phox, NCF4/p40-phox and the small GTPase RAC1 or RAC2. Part of a cytosolic complex composed at least by NCF1, NCF2 and NCF4. Interacts with NCF2. Interacts with NCF1. The NCF2-NCF4 complex interacts with GBP7 (via GB1/RHD3-type G domain).

It localises to the cytoplasm. It is found in the cytosol. The protein resides in the endosome membrane. Its subcellular location is the membrane. Its function is as follows. Subunit of the phagocyte NADPH oxidase complex that mediates the transfer of electrons from cytosolic NADPH to O2 to produce the superoxide anion (O2(-)). In the activated complex, electrons are first transferred from NADPH to flavin adenine dinucleotide (FAD) and subsequently transferred via two heme molecules to molecular oxygen, producing superoxide through an outer-sphere reaction. Activation of the NADPH oxidase complex is initiated by the assembly of cytosolic subunits of the NADPH oxidase complex with the core NADPH oxidase complex to form a complex at the plasma membrane or phagosomal membrane. This activation process is initiated by phosphorylation dependent binding of the cytosolic NCF1/p47-phox subunit to the C-terminus of CYBA/p22-phox. This chain is Neutrophil cytosol factor 4, found in Mus musculus (Mouse).